The sequence spans 277 residues: Shikimate dehydrogenase (NADP(+)) (277 aa).

Residues Ser-15–Ser-17 and Thr-62 contribute to the shikimate site. The active-site Proton acceptor is Lys-66. Positions 87 and 102 each coordinate shikimate. NADP(+)-binding positions include Gly-127 to Ala-131, Asn-151 to Lys-156, and Ile-219. Tyr-221 contacts shikimate. Gly-242 is an NADP(+) binding site.

The protein belongs to the shikimate dehydrogenase family. Homodimer.

It carries out the reaction shikimate + NADP(+) = 3-dehydroshikimate + NADPH + H(+). It participates in metabolic intermediate biosynthesis; chorismate biosynthesis; chorismate from D-erythrose 4-phosphate and phosphoenolpyruvate: step 4/7. In terms of biological role, involved in the biosynthesis of the chorismate, which leads to the biosynthesis of aromatic amino acids. Catalyzes the reversible NADPH linked reduction of 3-dehydroshikimate (DHSA) to yield shikimate (SA). This chain is Shikimate dehydrogenase (NADP(+)), found in Geobacillus sp. (strain WCH70).